Consider the following 161-residue polypeptide: Carboxysome assembly protein CcmN (161 aa).

Residues leucine 111–histidine 140 form a disordered region. Positions threonine 116 to alanine 137 are enriched in polar residues. An Encapsulation peptide motif is present at residues valine 144–arginine 161.

This sequence belongs to the CcmN family. As to quaternary structure, interacts with CcmM via the N-terminus of CcmN. Interacts with CcmK2 via the 18 C-terminal residues.

Its subcellular location is the carboxysome. Its function is as follows. Required for carboxysome formation; the N-terminus interacts with CcmM which itself binds RuBisCO (ribulose bisphosphate carboxylase, rbcL-rbcS), while the C-terminal 18 residues interact with carboxysome shell protein CcmK2. Required for growth in normal air. Beta-carboxysome assembly initiates when soluble RuBisCO is condensed into a liquid matrix in a pre-carboxysome by the RbcS-like domains of probably both CcmM58 and CcmM35. CcmN interacts with the N-terminus of CcmM58, and then recruits the CcmK2 major shell protein via CcmN's encapsulation peptide. Shell formation requires CcmK proteins and CcmO. CcmL caps the otherwise elongated carboxysome. Once fully encapsulated carboxysomes are formed, they migrate within the cell probably via interactions with the cytoskeleton. The sequence is that of Carboxysome assembly protein CcmN from Synechococcus elongatus (strain ATCC 33912 / PCC 7942 / FACHB-805) (Anacystis nidulans R2).